The primary structure comprises 416 residues: Actin-like protein 9 (416 aa).

The disordered stretch occupies residues 1-23; the sequence is MDPNQGNPLEPQDSPEIPKPSLN.

Belongs to the actin family. In terms of assembly, interacts with ACTL7A.

It localises to the cytoplasmic vesicle. The protein localises to the secretory vesicle. Its subcellular location is the acrosome. It is found in the cytoplasm. The protein resides in the cytoskeleton. It localises to the perinuclear theca. Testis-specic protein that plays an important role in fusion of proacrosomal vesicles and perinuclear theca formation. In Bos taurus (Bovine), this protein is Actin-like protein 9 (ACTL9).